Here is a 37-residue protein sequence, read N- to C-terminus: Unknown protein 25 (37 aa).

This chain is Unknown protein 25, found in Pseudotsuga menziesii (Douglas-fir).